A 178-amino-acid chain; its full sequence is Ribonuclease M5 (178 aa).

A Toprim domain is found at 10–103 (DGVIVCEGKT…NSTKIGVAEA (94 aa)). Positions 16, 62, and 64 each coordinate Mg(2+).

The protein belongs to the ribonuclease M5 family. Requires Mg(2+) as cofactor.

The protein resides in the cytoplasm. The enzyme catalyses Endonucleolytic cleavage of RNA, removing 21 and 42 nucleotides, respectively, from the 5'- and 3'-termini of a 5S-rRNA precursor.. Its function is as follows. Required for correct processing of both the 5' and 3' ends of 5S rRNA precursor. Cleaves both sides of a double-stranded region yielding mature 5S rRNA in one step. This chain is Ribonuclease M5, found in Mycoplasma pneumoniae (strain ATCC 29342 / M129 / Subtype 1) (Mycoplasmoides pneumoniae).